Reading from the N-terminus, the 341-residue chain is GTPase Obg (341 aa).

An Obg domain is found at 2–160 (SGFIDEVPIQ…FSLILELKLL (159 aa)). The region spanning 161 to 330 (ADIGIVGLPN…LLERIDKVFF (170 aa)) is the OBG-type G domain. Residues 167-174 (GLPNAGKS), 192-196 (FTTLS), 215-218 (DIPG), 282-285 (NKMD), and 311-313 (SAD) each bind GTP. Residues Ser-174 and Thr-194 each coordinate Mg(2+).

Belongs to the TRAFAC class OBG-HflX-like GTPase superfamily. OBG GTPase family. In terms of assembly, monomer. Mg(2+) is required as a cofactor.

Its subcellular location is the cytoplasm. Its function is as follows. An essential GTPase which binds GTP, GDP and possibly (p)ppGpp with moderate affinity, with high nucleotide exchange rates and a fairly low GTP hydrolysis rate. Plays a role in control of the cell cycle, stress response, ribosome biogenesis and in those bacteria that undergo differentiation, in morphogenesis control. The chain is GTPase Obg from Leptospira biflexa serovar Patoc (strain Patoc 1 / Ames).